The chain runs to 218 residues: Adenylate kinase (218 aa).

10–15 (GAGKGT) serves as a coordination point for ATP. An NMP region spans residues 30–59 (STGDMFRAAMADQTDLGVKAKAFIDKGELV). Residues Thr31, Arg36, 57–59 (ELV), 85–88 (GFPR), and Gln92 each bind AMP. The segment at 126-164 (GRFICKTCGATYHKLYHPTQVEGTCDRCGGHVFFQREDD) is LID. ATP is bound at residue Arg127. The Zn(2+) site is built by Cys130 and Cys133. 136–137 (TY) serves as a coordination point for ATP. Positions 150 and 153 each coordinate Zn(2+). Residues Arg161 and Arg172 each coordinate AMP. Gln200 contacts ATP.

Belongs to the adenylate kinase family. As to quaternary structure, monomer.

Its subcellular location is the cytoplasm. It carries out the reaction AMP + ATP = 2 ADP. Its pathway is purine metabolism; AMP biosynthesis via salvage pathway; AMP from ADP: step 1/1. Functionally, catalyzes the reversible transfer of the terminal phosphate group between ATP and AMP. Plays an important role in cellular energy homeostasis and in adenine nucleotide metabolism. This chain is Adenylate kinase, found in Latilactobacillus sakei subsp. sakei (strain 23K) (Lactobacillus sakei subsp. sakei).